The primary structure comprises 49 residues: Turripeptide OL47 (49 aa).

The segment at 28-49 is disordered; the sequence is RSDTEKKCTGGPDPCPPRQWPD. Positions 40–49 are enriched in pro residues; that stretch reads DPCPPRQWPD.

Post-translationally, contains 4 disulfide bonds. In terms of tissue distribution, expressed by the venom duct.

The protein localises to the secreted. Acts as a neurotoxin by inhibiting an ion channel. This chain is Turripeptide OL47, found in Iotyrris olangoensis (Sea snail).